The chain runs to 901 residues: Clathrin coat assembly protein AP180 (901 aa).

An ENTH domain is found at 14–145; that stretch reads QYSVTGSAVA…FSYRQMAFDF (132 aa). 4 disordered regions span residues 285–326, 397–424, 497–522, and 573–606; these read LEGK…DTSP, PISDPFAPEPSPPTTTTEPASASASTTT, PETSAPVVTPTASTAPPVPATAPSPA, and AAAPKPDAAPSIDLFGTDAFSSPPRGASPVPESS. A phosphoserine mark is found at serine 296, serine 300, and serine 306. Positions 302–324 are enriched in polar residues; it reads LSKSSPATTVTSPNSTPAKTIDT. O-linked (GlcNAc) threonine glycosylation occurs at threonine 310. Residue serine 313 is modified to Phosphoserine. Phosphothreonine is present on threonine 317. 2 stretches are compositionally biased toward low complexity: residues 410–424 and 500–511; these read TTTTEPASASASTTT and SAPVVTPTASTA. Residues 512–522 are compositionally biased toward pro residues; that stretch reads PPVPATAPSPA. Phosphoserine occurs at positions 594, 600, 621, 627, and 761. Disordered regions lie at residues 803–845 and 857–901; these read SAGV…GMTM and MMRP…KDFL. The span at 835 to 845 shows a compositional bias: low complexity; that stretch reads GMPPSGTGMTM. An Asymmetric dimethylarginine; alternate modification is found at arginine 859. The residue at position 859 (arginine 859) is an Omega-N-methylarginine; alternate. The segment covering 870-882 has biased composition (polar residues); the sequence is TQLSPSPTPATQS. A compositionally biased stretch (basic and acidic residues) spans 887-901; it reads PAKDPLADLNIKDFL.

Belongs to the PICALM/SNAP91 family. As to quaternary structure, binds AP2A2. Interacts with AP2B1; clathrin competes with SNAP91. In terms of processing, thr-310 can be modified by the addition of N-acetylglucosamine which can be further phosphorylated. There is no evidence for direct Thr-310 phosphorylation. In terms of tissue distribution, brain. Associated with the synapses.

The protein localises to the cell membrane. Its subcellular location is the membrane. It is found in the coated pit. Adaptins are components of the adaptor complexes which link clathrin to receptors in coated vesicles. Clathrin-associated protein complexes are believed to interact with the cytoplasmic tails of membrane proteins, leading to their selection and concentration. Binding of AP180 to clathrin triskelia induces their assembly into 60-70 nm coats. This Mus musculus (Mouse) protein is Clathrin coat assembly protein AP180 (Snap91).